We begin with the raw amino-acid sequence, 92 residues long: PqqA binding protein (92 aa).

The protein belongs to the PqqD family. In terms of assembly, monomer. Interacts with PqqE.

The protein operates within cofactor biosynthesis; pyrroloquinoline quinone biosynthesis. Functionally, functions as a PqqA binding protein and presents PqqA to PqqE, in the pyrroloquinoline quinone (PQQ) biosynthetic pathway. This chain is PqqA binding protein, found in Xanthomonas oryzae pv. oryzae (strain MAFF 311018).